Consider the following 314-residue polypeptide: Transcriptional regulatory protein GlnL (314 aa).

Residues 2 to 118 (RFFIADDDRA…EIVTVLQKVK (117 aa)) form the Response regulatory domain. D54 carries the 4-aspartylphosphate modification.

In terms of processing, phosphorylated by GlnK.

Its subcellular location is the cytoplasm. In terms of biological role, member of the two-component regulatory system GlnL/GlnK that positively regulates the expression of the glsA-glnT operon in response to glutamine. GlnL binds the promoter region of glsA-glnT in vitro. This Bacillus subtilis (strain 168) protein is Transcriptional regulatory protein GlnL (glnL).